The primary structure comprises 311 residues: Aspartate carbamoyltransferase catalytic subunit (311 aa).

Positions 59 and 60 each coordinate carbamoyl phosphate. Lysine 87 contributes to the L-aspartate binding site. Carbamoyl phosphate-binding residues include arginine 109, histidine 139, and glutamine 142. L-aspartate-binding residues include arginine 172 and arginine 224. Carbamoyl phosphate is bound by residues alanine 265 and proline 266.

This sequence belongs to the aspartate/ornithine carbamoyltransferase superfamily. ATCase family. In terms of assembly, heterododecamer (2C3:3R2) of six catalytic PyrB chains organized as two trimers (C3), and six regulatory PyrI chains organized as three dimers (R2).

The catalysed reaction is carbamoyl phosphate + L-aspartate = N-carbamoyl-L-aspartate + phosphate + H(+). The protein operates within pyrimidine metabolism; UMP biosynthesis via de novo pathway; (S)-dihydroorotate from bicarbonate: step 2/3. Catalyzes the condensation of carbamoyl phosphate and aspartate to form carbamoyl aspartate and inorganic phosphate, the committed step in the de novo pyrimidine nucleotide biosynthesis pathway. The protein is Aspartate carbamoyltransferase catalytic subunit of Streptococcus equi subsp. equi (strain 4047).